Consider the following 160-residue polypeptide: Phosphopantetheine adenylyltransferase (160 aa).

Position 10 (T10) interacts with substrate. Residues T10 to F11 and H18 each bind ATP. The substrate site is built by K42, L74, and R88. Residues G89–R91, E99, and N124–T130 each bind ATP.

It belongs to the bacterial CoaD family. Homohexamer. It depends on Mg(2+) as a cofactor.

It is found in the cytoplasm. The enzyme catalyses (R)-4'-phosphopantetheine + ATP + H(+) = 3'-dephospho-CoA + diphosphate. It participates in cofactor biosynthesis; coenzyme A biosynthesis; CoA from (R)-pantothenate: step 4/5. Functionally, reversibly transfers an adenylyl group from ATP to 4'-phosphopantetheine, yielding dephospho-CoA (dPCoA) and pyrophosphate. The polypeptide is Phosphopantetheine adenylyltransferase (Shewanella piezotolerans (strain WP3 / JCM 13877)).